The chain runs to 96 residues: Aspartyl/glutamyl-tRNA(Asn/Gln) amidotransferase subunit C (96 aa).

This sequence belongs to the GatC family. In terms of assembly, heterotrimer of A, B and C subunits.

The catalysed reaction is L-glutamyl-tRNA(Gln) + L-glutamine + ATP + H2O = L-glutaminyl-tRNA(Gln) + L-glutamate + ADP + phosphate + H(+). It catalyses the reaction L-aspartyl-tRNA(Asn) + L-glutamine + ATP + H2O = L-asparaginyl-tRNA(Asn) + L-glutamate + ADP + phosphate + 2 H(+). In terms of biological role, allows the formation of correctly charged Asn-tRNA(Asn) or Gln-tRNA(Gln) through the transamidation of misacylated Asp-tRNA(Asn) or Glu-tRNA(Gln) in organisms which lack either or both of asparaginyl-tRNA or glutaminyl-tRNA synthetases. The reaction takes place in the presence of glutamine and ATP through an activated phospho-Asp-tRNA(Asn) or phospho-Glu-tRNA(Gln). The chain is Aspartyl/glutamyl-tRNA(Asn/Gln) amidotransferase subunit C from Leptospira interrogans serogroup Icterohaemorrhagiae serovar copenhageni (strain Fiocruz L1-130).